Here is an 83-residue protein sequence, read N- to C-terminus: ATP synthase subunit c (83 aa).

2 consecutive transmembrane segments (helical) span residues 10 to 30 (IAVA…FGLL) and 52 to 72 (MFIV…IALY).

The protein belongs to the ATPase C chain family. As to quaternary structure, F-type ATPases have 2 components, F(1) - the catalytic core - and F(0) - the membrane proton channel. F(1) has five subunits: alpha(3), beta(3), gamma(1), delta(1), epsilon(1). F(0) has three main subunits: a(1), b(2) and c(10-14). The alpha and beta chains form an alternating ring which encloses part of the gamma chain. F(1) is attached to F(0) by a central stalk formed by the gamma and epsilon chains, while a peripheral stalk is formed by the delta and b chains.

The protein localises to the cell inner membrane. Functionally, f(1)F(0) ATP synthase produces ATP from ADP in the presence of a proton or sodium gradient. F-type ATPases consist of two structural domains, F(1) containing the extramembraneous catalytic core and F(0) containing the membrane proton channel, linked together by a central stalk and a peripheral stalk. During catalysis, ATP synthesis in the catalytic domain of F(1) is coupled via a rotary mechanism of the central stalk subunits to proton translocation. Key component of the F(0) channel; it plays a direct role in translocation across the membrane. A homomeric c-ring of between 10-14 subunits forms the central stalk rotor element with the F(1) delta and epsilon subunits. This chain is ATP synthase subunit c, found in Shewanella denitrificans (strain OS217 / ATCC BAA-1090 / DSM 15013).